A 179-amino-acid polypeptide reads, in one-letter code: MNESKRENIQVINIGDCRAVLCKNGLAIPLNKDHKPIWPDEKRRIDRVNEKYETNEKIHFDAGDWRIGDLSVSRSFGDLDNTPYVTHVPDLFDYQLQSDDEFIIMACDGVWDVLENHEAINFVRDHRNDNHTEFYSIPGKYPNREAFESDNISRKLASYAIARGSTDNVSVIIIFFSKE.

The PPM-type phosphatase domain occupies 1-176 (MNESKRENIQ…DNVSVIIIFF (176 aa)).

It is found in the virion. The protein is PP2C-like domain-containing protein R307 of Acanthamoeba polyphaga mimivirus (APMV).